Reading from the N-terminus, the 84-residue chain is Small ribosomal subunit protein bS18A (84 aa).

The protein belongs to the bacterial ribosomal protein bS18 family. In terms of assembly, part of the 30S ribosomal subunit. Forms a tight heterodimer with protein bS6.

Functionally, binds as a heterodimer with protein bS6 to the central domain of the 16S rRNA, where it helps stabilize the platform of the 30S subunit. The chain is Small ribosomal subunit protein bS18A (rpsR1) from Mycobacterium bovis (strain ATCC BAA-935 / AF2122/97).